Consider the following 313-residue polypeptide: Platelet glycoprotein VI (313 aa).

The N-terminal stretch at 1-21 (MSPASPTFFCIGLCVLQVIQT) is a signal peptide. Over 22 to 265 (QSGPLPKPSL…FGFAHQHYAK (244 aa)) the chain is Extracellular. Ig-like C2-type domains lie at 27 to 105 (PKPS…DQLE) and 115 to 197 (PSLS…APSD). The cysteines at positions 49 and 89 are disulfide-linked. N-linked (GlcNAc...) asparagine glycosylation occurs at Asn93. A disulfide bridge connects residues Cys135 and Cys181. The interval 213–236 (VPTEESFPVTESSRRPSILPTNKI) is disordered. N-linked (GlcNAc...) asparagine glycosylation is present at Asn244. Residues 266–286 (GNLVRICLGATIIIILLGLLA) traverse the membrane as a helical segment. Residues 287–313 (EDWHSRKKCLQHRMRALQRPLPPLPLA) are Cytoplasmic-facing.

Associated with Fc receptor gamma chain. The GPVI:FcRgamma complex is associated with the Src kinase family FYN and LYN. Interacts with TRAF4. Interacts with COL1A1, but not with COL4A4. Megakaryocytes and platelets.

It localises to the cell membrane. Functionally, collagen receptor involved in collagen-induced platelet adhesion and activation. Plays a key role in platelet procoagulant activity and subsequent thrombin and fibrin formation. This procoagulant function may contribute to arterial and venous thrombus formation. The signaling pathway involves the FcR gamma-chain, the Src kinases (likely FYN or LYN) and SYK, the adapter protein LAT and leads to the activation of PLCG2. This Mus musculus (Mouse) protein is Platelet glycoprotein VI.